The chain runs to 324 residues: Glutamyl-Q tRNA(Asp) synthetase (324 aa).

Residues 5 to 9 and Glu41 contribute to the L-glutamate site; that span reads RLAPS. The 'HIGH' region signature appears at 8–18; sequence PSPTGNIHLGN. Residues Cys105, Cys107, Tyr128, and Cys132 each coordinate Zn(2+). Tyr193 and Arg211 together coordinate L-glutamate. The short motif at 249–253 is the 'KMSKS' region element; it reads RLAKR. Residue Lys252 coordinates ATP.

This sequence belongs to the class-I aminoacyl-tRNA synthetase family. GluQ subfamily. Requires Zn(2+) as cofactor.

Catalyzes the tRNA-independent activation of glutamate in presence of ATP and the subsequent transfer of glutamate onto a tRNA(Asp). Glutamate is transferred on the 2-amino-5-(4,5-dihydroxy-2-cyclopenten-1-yl) moiety of the queuosine in the wobble position of the QUC anticodon. In Nitratidesulfovibrio vulgaris (strain ATCC 29579 / DSM 644 / CCUG 34227 / NCIMB 8303 / VKM B-1760 / Hildenborough) (Desulfovibrio vulgaris), this protein is Glutamyl-Q tRNA(Asp) synthetase.